The chain runs to 213 residues: Phosphatidylserine decarboxylase proenzyme (213 aa).

Serine 182 serves as the catalytic Schiff-base intermediate with substrate; via pyruvic acid. Serine 182 is subject to Pyruvic acid (Ser); by autocatalysis.

It belongs to the phosphatidylserine decarboxylase family. PSD-A subfamily. In terms of assembly, heterodimer of a large membrane-associated beta subunit and a small pyruvoyl-containing alpha subunit. Pyruvate serves as cofactor. Is synthesized initially as an inactive proenzyme. Formation of the active enzyme involves a self-maturation process in which the active site pyruvoyl group is generated from an internal serine residue via an autocatalytic post-translational modification. Two non-identical subunits are generated from the proenzyme in this reaction, and the pyruvate is formed at the N-terminus of the alpha chain, which is derived from the carboxyl end of the proenzyme. The post-translation cleavage follows an unusual pathway, termed non-hydrolytic serinolysis, in which the side chain hydroxyl group of the serine supplies its oxygen atom to form the C-terminus of the beta chain, while the remainder of the serine residue undergoes an oxidative deamination to produce ammonia and the pyruvoyl prosthetic group on the alpha chain.

Its subcellular location is the cell membrane. It catalyses the reaction a 1,2-diacyl-sn-glycero-3-phospho-L-serine + H(+) = a 1,2-diacyl-sn-glycero-3-phosphoethanolamine + CO2. Its pathway is phospholipid metabolism; phosphatidylethanolamine biosynthesis; phosphatidylethanolamine from CDP-diacylglycerol: step 2/2. Its function is as follows. Catalyzes the formation of phosphatidylethanolamine (PtdEtn) from phosphatidylserine (PtdSer). This is Phosphatidylserine decarboxylase proenzyme from Chlorobium phaeobacteroides (strain BS1).